We begin with the raw amino-acid sequence, 511 residues long: Inner membrane ABC transporter permease protein YnjC (511 aa).

The Cytoplasmic segment spans residues 1–8 (MATPLRYA). The chain crosses the membrane as a helical span at residues 9–29 (LIFLLWAMVAVIYAPLIPAAL). At 30-62 (TLISPALSLTHWQALFADPQLPQALLATLVSTT) the chain is on the periplasmic side. The ABC transmembrane type-1 1 domain maps to 54–255 (LLATLVSTTI…MLLLAAYVLL (202 aa)). The helical transmembrane segment at 63–83 (IAAVGALLIALLVIVALWPGP) threads the bilayer. The Cytoplasmic portion of the chain corresponds to 84–91 (KWQRMCAR). Residues 92–112 (LPWLLAIPHVAFATSALLLFA) traverse the membrane as a helical segment. At 113–130 (DGGLLYDYFPYFTPPMDR) the chain is on the periplasmic side. The helical transmembrane segment at 131-151 (FGIGLGLTLAVKESAFLLWIL) threads the bilayer. The Cytoplasmic portion of the chain corresponds to 152 to 189 (AAVLSEKWLLQQVIVLDSLGYSRWQCLNWLLLPSVAPA). A helical membrane pass occupies residues 190–210 (LAMAMLAIVAWSLSVVDVAII). Topologically, residues 211-239 (LGPGNPPTLAVISWQWLTQGDIDQQTKGA) are periplasmic. Residues 240 to 260 (LASLLLMLLLAAYVLLSYLLW) form a helical membrane-spanning segment. The Cytoplasmic segment spans residues 261–284 (RSWRRTIPRVDGVRKPATPLLPGN). Residues 285–305 (TLAIFLPLTGVLCVVLLAILA) traverse the membrane as a helical segment. At 306-318 (DQSTINSEALINS) the chain is on the periplasmic side. Positions 315-496 (LINSLTMGLV…LLPLIIFALT (182 aa)) constitute an ABC transmembrane type-1 2 domain. A helical transmembrane segment spans residues 319–339 (LTMGLVATFIALLLLLLWLEW). Over 340 to 345 (GPQRRQ) the chain is Cytoplasmic. The helical transmembrane segment at 346 to 366 (LWLWLPILLPALPLVAGQYTL) threads the bilayer. Residues 367 to 374 (ALWLKLDG) are Periplasmic-facing. Residues 375–395 (SWTAVVWGHLLWVMPWMLFIL) form a helical membrane-spanning segment. The Cytoplasmic portion of the chain corresponds to 396–432 (QPAWQRIDSRLILIAQTLGWSRAKIFFYVKCPLMLRP). Residues 433 to 453 (VLIAFAVGFAVGIAQYMPTLW) traverse the membrane as a helical segment. At 454–485 (LGAGRFPTLTTEAVALSSGGSNGILAAQALWQ) the chain is on the periplasmic side. The chain crosses the membrane as a helical span at residues 486–506 (LLLPLIIFALTALVAKWVGYV). Over 507-511 (RQGLR) the chain is Cytoplasmic.

The protein belongs to the binding-protein-dependent transport system permease family.

Its subcellular location is the cell inner membrane. Its function is as follows. Probably part of the binding-protein-dependent transport system YnjCD. Probably responsible for the translocation of the substrate across the membrane. The chain is Inner membrane ABC transporter permease protein YnjC (ynjC) from Escherichia coli (strain K12).